Reading from the N-terminus, the 211-residue chain is Ubiquitin-conjugating enzyme E2 S-B (211 aa).

In terms of domain architecture, UBC core spans 11–157 (HIIRRVYKEV…ARLMTDIHAQ (147 aa)). Cys95 acts as the Glycyl thioester intermediate in catalysis. The segment at 158 to 211 (GTSLRGKDPTDPCSSASTPVVSGDGPMAKKHAGDRDKKLAAKKKTDKKRALRRL) is disordered. Positions 197-211 (AAKKKTDKKRALRRL) are enriched in basic residues.

Belongs to the ubiquitin-conjugating enzyme family.

The catalysed reaction is S-ubiquitinyl-[E1 ubiquitin-activating enzyme]-L-cysteine + [E2 ubiquitin-conjugating enzyme]-L-cysteine = [E1 ubiquitin-activating enzyme]-L-cysteine + S-ubiquitinyl-[E2 ubiquitin-conjugating enzyme]-L-cysteine.. It functions in the pathway protein modification; protein ubiquitination. Functionally, catalyzes the covalent attachment of ubiquitin to other proteins. Acts as an essential factor of the anaphase promoting complex/cyclosome (APC/C), a cell cycle-regulated ubiquitin ligase that controls progression through mitosis. Acts by specifically elongating 'Lys-11'-linked polyubiquitin chains initiated by the E2 enzyme ube2c/ubch10 on APC/C substrates, enhancing the degradation of APC/C substrates by the proteasome and promoting mitotic exit. This is Ubiquitin-conjugating enzyme E2 S-B (ube2s-b) from Xenopus laevis (African clawed frog).